An 863-amino-acid chain; its full sequence is Bifunctional uridylyltransferase/uridylyl-removing enzyme (863 aa).

The tract at residues 1–328 is uridylyltransferase; the sequence is MLFSPTLSSL…SSNQDTVIDQ (328 aa). The uridylyl-removing stretch occupies residues 329-687; sequence LDDDFQLINQ…ISNRFSLGGT (359 aa). The 123-residue stretch at 446 to 568 folds into the HD domain; it reads VDEHTLRVML…MQNQVRLDYL (123 aa). 2 consecutive ACT domains span residues 688 to 764 and 794 to 863; these read EVFI…KLPA and EMEL…QQIR.

This sequence belongs to the GlnD family. Mg(2+) is required as a cofactor.

It catalyses the reaction [protein-PII]-L-tyrosine + UTP = [protein-PII]-uridylyl-L-tyrosine + diphosphate. The enzyme catalyses [protein-PII]-uridylyl-L-tyrosine + H2O = [protein-PII]-L-tyrosine + UMP + H(+). Uridylyltransferase (UTase) activity is inhibited by glutamine, while glutamine activates uridylyl-removing (UR) activity. In terms of biological role, modifies, by uridylylation and deuridylylation, the PII regulatory proteins (GlnB and homologs), in response to the nitrogen status of the cell that GlnD senses through the glutamine level. Under low glutamine levels, catalyzes the conversion of the PII proteins and UTP to PII-UMP and PPi, while under higher glutamine levels, GlnD hydrolyzes PII-UMP to PII and UMP (deuridylylation). Thus, controls uridylylation state and activity of the PII proteins, and plays an important role in the regulation of nitrogen assimilation and metabolism. The polypeptide is Bifunctional uridylyltransferase/uridylyl-removing enzyme (Haemophilus influenzae (strain ATCC 51907 / DSM 11121 / KW20 / Rd)).